The sequence spans 376 residues: Putative glutamate--cysteine ligase 2 (376 aa).

This sequence belongs to the glutamate--cysteine ligase type 2 family. YbdK subfamily.

The catalysed reaction is L-cysteine + L-glutamate + ATP = gamma-L-glutamyl-L-cysteine + ADP + phosphate + H(+). ATP-dependent carboxylate-amine ligase which exhibits weak glutamate--cysteine ligase activity. In Corynebacterium glutamicum (strain R), this protein is Putative glutamate--cysteine ligase 2.